Here is a 469-residue protein sequence, read N- to C-terminus: Coumaroyl-CoA:anthocyanidin 3-O-glucoside-6''-O-coumaroyltransferase 1 (469 aa).

An N-acetylmethionine modification is found at Met1. Residues His173 and Asp410 each act as proton acceptor in the active site.

It belongs to the plant acyltransferase family. In terms of tissue distribution, highly expressed in flowers, leaves and roots. Lower levels of expression in stems and siliques.

Its function is as follows. Involved in the acylation of the 6'' position of the 3-O-glucose residue of anthocyanin. Also able to use flavonol 3-glucosides as the acyl acceptor. The protein is Coumaroyl-CoA:anthocyanidin 3-O-glucoside-6''-O-coumaroyltransferase 1 (3AT1) of Arabidopsis thaliana (Mouse-ear cress).